The following is a 678-amino-acid chain: DNA ligase (678 aa).

Residues 36-40 (DAEYD), 85-86 (SL), and glutamate 117 contribute to the NAD(+) site. The N6-AMP-lysine intermediate role is filled by lysine 119. NAD(+) is bound by residues arginine 140, glutamate 177, lysine 294, and lysine 318. Positions 412, 415, 430, and 436 each coordinate Zn(2+). Positions 595 to 678 (ADEQPLNGQT…NLLREHGIEV (84 aa)) constitute a BRCT domain.

It belongs to the NAD-dependent DNA ligase family. LigA subfamily. Mg(2+) serves as cofactor. The cofactor is Mn(2+).

The enzyme catalyses NAD(+) + (deoxyribonucleotide)n-3'-hydroxyl + 5'-phospho-(deoxyribonucleotide)m = (deoxyribonucleotide)n+m + AMP + beta-nicotinamide D-nucleotide.. In terms of biological role, DNA ligase that catalyzes the formation of phosphodiester linkages between 5'-phosphoryl and 3'-hydroxyl groups in double-stranded DNA using NAD as a coenzyme and as the energy source for the reaction. It is essential for DNA replication and repair of damaged DNA. The chain is DNA ligase from Marinobacter nauticus (strain ATCC 700491 / DSM 11845 / VT8) (Marinobacter aquaeolei).